Here is a 683-residue protein sequence, read N- to C-terminus: uncharacterized protein (683 aa).

Polar residues-rich tracts occupy residues 407–420 (FETS…TYTP) and 512–529 (EGSS…SSEA). Disordered stretches follow at residues 407–427 (FETS…KLST), 509–556 (FSRE…SSTV), and 621–648 (HNTS…DHPD). Residues 531-542 (LPPLLTTTPTPT) show a composition bias toward low complexity. Polar residues-rich tracts occupy residues 543 to 556 (NTEK…SSTV) and 621 to 630 (HNTSMPNPHH). A compositionally biased stretch (basic and acidic residues) spans 633 to 648 (VKPEDHPHHPEGDHPD). The helical transmembrane segment at 657–677 (IWLLPIAGTIFALVALVIVNI) threads the bilayer.

The protein localises to the host membrane. This is an uncharacterized protein from Alcelaphine herpesvirus 1 (strain C500) (AlHV-1).